A 293-amino-acid chain; its full sequence is ATP synthase gamma chain (293 aa).

It belongs to the ATPase gamma chain family. As to quaternary structure, F-type ATPases have 2 components, CF(1) - the catalytic core - and CF(0) - the membrane proton channel. CF(1) has five subunits: alpha(3), beta(3), gamma(1), delta(1), epsilon(1). CF(0) has three main subunits: a, b and c.

Its subcellular location is the cell membrane. Its function is as follows. Produces ATP from ADP in the presence of a proton gradient across the membrane. The gamma chain is believed to be important in regulating ATPase activity and the flow of protons through the CF(0) complex. This Streptococcus agalactiae serotype III (strain NEM316) protein is ATP synthase gamma chain.